The sequence spans 236 residues: Exotoxin type H (236 aa).

Positions 1 to 32 (MRYNCRYSHIDKKIYSMIICLSFLLYSNVVQA) are cleaved as a signal peptide.

This sequence belongs to the staphylococcal/streptococcal toxin family.

The protein resides in the secreted. Functionally, mitogenic for human peripheral blood lymphocytes. This Streptococcus pyogenes serotype M1 protein is Exotoxin type H (speH).